Reading from the N-terminus, the 390-residue chain is S-adenosylmethionine synthase 4 (390 aa).

Residue E9 coordinates Mg(2+). ATP is bound at residue H15. A K(+)-binding site is contributed by E43. L-methionine is bound by residues E56 and Q99. Residues 167–169, 235–238, D246, 252–253, A269, K273, and K277 each bind ATP; these read DGK, SGRF, and RK. Residue D246 participates in L-methionine binding. K277 lines the L-methionine pocket.

The protein belongs to the AdoMet synthase family. Homotetramer. Requires Mn(2+) as cofactor. Mg(2+) is required as a cofactor. Co(2+) serves as cofactor. It depends on K(+) as a cofactor.

Its subcellular location is the cytoplasm. It carries out the reaction L-methionine + ATP + H2O = S-adenosyl-L-methionine + phosphate + diphosphate. Its pathway is amino-acid biosynthesis; S-adenosyl-L-methionine biosynthesis; S-adenosyl-L-methionine from L-methionine: step 1/1. Its function is as follows. Catalyzes the formation of S-adenosylmethionine from methionine and ATP. The reaction comprises two steps that are both catalyzed by the same enzyme: formation of S-adenosylmethionine (AdoMet) and triphosphate, and subsequent hydrolysis of the triphosphate. The protein is S-adenosylmethionine synthase 4 (METK4) of Populus trichocarpa (Western balsam poplar).